Here is a 265-residue protein sequence, read N- to C-terminus: Sarcotoxin II-1 (265 aa).

An N-terminal signal peptide occupies residues 1–22 (MKSFVLFAACMAIIALGSLAHA). The propeptide at 23–24 (YP) is removed by a dipeptidylpeptidase. Pyrrolidone carboxylic acid is present on Gln-25. Residue Gly-264 is modified to Glycine amide.

This sequence belongs to the attacin/sarcotoxin-2 family. Synthesized by the fat body and is eventually secreted into the hemolymph.

Its subcellular location is the secreted. Sarcotoxin II is an antibacterial protein which plays a role in the inflammatory response of this insect. The main effect of sarcotoxin II on E.coli may be the inhibition of cell wall synthesis, including septum formation. In Sarcophaga peregrina (Flesh fly), this protein is Sarcotoxin II-1.